A 117-amino-acid polypeptide reads, in one-letter code: Large ribosomal subunit protein bL20 (117 aa).

Belongs to the bacterial ribosomal protein bL20 family.

Functionally, binds directly to 23S ribosomal RNA and is necessary for the in vitro assembly process of the 50S ribosomal subunit. It is not involved in the protein synthesizing functions of that subunit. The protein is Large ribosomal subunit protein bL20 of Brachyspira hyodysenteriae (strain ATCC 49526 / WA1).